Here is a 466-residue protein sequence, read N- to C-terminus: 3-isopropylmalate dehydratase large subunit (466 aa).

3 residues coordinate [4Fe-4S] cluster: C347, C407, and C410.

It belongs to the aconitase/IPM isomerase family. LeuC type 1 subfamily. Heterodimer of LeuC and LeuD. [4Fe-4S] cluster is required as a cofactor.

It carries out the reaction (2R,3S)-3-isopropylmalate = (2S)-2-isopropylmalate. The protein operates within amino-acid biosynthesis; L-leucine biosynthesis; L-leucine from 3-methyl-2-oxobutanoate: step 2/4. Its function is as follows. Catalyzes the isomerization between 2-isopropylmalate and 3-isopropylmalate, via the formation of 2-isopropylmaleate. This Escherichia coli O139:H28 (strain E24377A / ETEC) protein is 3-isopropylmalate dehydratase large subunit.